Here is a 126-residue protein sequence, read N- to C-terminus: Large ribosomal subunit protein bL12 (126 aa).

Belongs to the bacterial ribosomal protein bL12 family. In terms of assembly, homodimer. Part of the ribosomal stalk of the 50S ribosomal subunit. Forms a multimeric L10(L12)X complex, where L10 forms an elongated spine to which 2 to 4 L12 dimers bind in a sequential fashion. Binds GTP-bound translation factors.

Its function is as follows. Forms part of the ribosomal stalk which helps the ribosome interact with GTP-bound translation factors. Is thus essential for accurate translation. The sequence is that of Large ribosomal subunit protein bL12 from Moorella thermoacetica (strain ATCC 39073 / JCM 9320).